Here is a 733-residue protein sequence, read N- to C-terminus: MELSMKKFTVRRFFSVYLRKKSRSKSSSLSRLEEEGIVKEIDISNHVKEGFEKADPSQFELLKVLGQGSYGKVFLVRKVTGSDAGQLYAMKVLKKATLKVRDRVRSKMERDILAEVNHPFIVKLHYAFQTEGKLYLILDFLRGGDLFTRLSKEVMFTEEDVKFYLAELALALDHLHGLGIIYRDLKPENILLDEEGHIKITDFGLSKEATDHDKRAYSFCGTIEYMAPEVVNRRGHTQSADWWSFGVLMFEMLTGSLPFQGKDRKETMALILKAKLGMPQFLSAEAQSLLRALFKRNPCNRLGAGVDGVEEIKRHPFFVTIDWNKLYRKEIKPPFKPAVGRPEDTFHFDPEFTARTPTDSPGVPPSANAHHLFRGFSFVASSLVQEPSQQDVPKAPIHPIVQQLHGNNIHFTDGYEIKEDIGVGSYSVCKRCVHKATDAEYAVKIIDKSKRDPSEEIEILLRYGQHPNIITLKDVYDDGKYVYLVMELMRGGELLDRILRQRCFSEREASDVLYTIARTMDYLHSQGVVHRDLKPSNILYMDESGNPESIRICDFGFAKQLRAENGLLMTPCYTANFVAPEVLKRQGYDAACDVWSLGILLYTMLAGFTPFANGPDDTPEEILARIGSGKYALSGGNWDSISDAAKDVVSKMLHVDPQQRLTAVQVLKHPWIVNREYLSQNQLSRQDVHLVKGAMAATYFALNRTPQAPRLEPVLSSSLAQRRGMKRLTSTRL.

The 260-residue stretch at Phe59–Phe318 folds into the Protein kinase 1 domain. ATP-binding positions include Leu65–Val73 and Lys91. The Proton acceptor role is filled by Asp184. Residue Ser218 is modified to Phosphoserine; by PDPK1. Residues Val319–Ser388 enclose the AGC-kinase C-terminal domain. A Phosphoserine modification is found at Ser377. In terms of domain architecture, Protein kinase 2 spans Tyr415–Ile672. ATP-binding positions include Ile421–Cys429 and Lys444. Catalysis depends on Asp532, which acts as the Proton acceptor.

Belongs to the protein kinase superfamily. AGC Ser/Thr protein kinase family. S6 kinase subfamily. As to quaternary structure, forms a complex with either MAPK1/ERK2 or MAPK3/ERK1 in quiescent cells. Transiently dissociates following mitogenic stimulation. Interacts with FBXO5; cooperate to induce the metaphase arrest of early blastomeres; increases and stabilizes interaction of FBXO5 with CDC20. Mg(2+) is required as a cofactor. Activated by phosphorylation at Ser-218 by PDPK1. Autophosphorylated on Ser-377, as part of the activation process. May be phosphorylated at Thr-356 and Ser-360 by MAPK1/ERK2 and MAPK3/ERK1. Post-translationally, N-terminal myristoylation results in an activated kinase in the absence of added growth factors.

The protein localises to the nucleus. It is found in the cytoplasm. The catalysed reaction is L-seryl-[protein] + ATP = O-phospho-L-seryl-[protein] + ADP + H(+). It catalyses the reaction L-threonyl-[protein] + ATP = O-phospho-L-threonyl-[protein] + ADP + H(+). Its activity is regulated as follows. Upon extracellular signal or mitogen stimulation, phosphorylated at Thr-570 in the C-terminal kinase domain (CTKD) by MAPK1/ERK2 and MAPK3/ERK1. The activated CTKD then autophosphorylates Ser-377, allowing binding of PDPK1, which in turn phosphorylates Ser-218 in the N-terminal kinase domain (NTDK) leading to the full activation of the protein and subsequent phosphorylation of the substrates by the NTKD. In terms of biological role, serine/threonine-protein kinase that acts downstream of ERK (MAPK1/ERK2 and MAPK3/ERK1) signaling and mediates mitogenic and stress-induced activation of transcription factors, regulates translation, and mediates cellular proliferation, survival, and differentiation. May function as tumor suppressor in epithelial ovarian cancer cells. This chain is Ribosomal protein S6 kinase alpha-2 (Rps6ka2), found in Mus musculus (Mouse).